Consider the following 145-residue polypeptide: Large ribosomal subunit protein uL11 (145 aa).

The protein belongs to the universal ribosomal protein uL11 family. In terms of assembly, part of the ribosomal stalk of the 50S ribosomal subunit. Interacts with L10 and the large rRNA to form the base of the stalk. L10 forms an elongated spine to which L12 dimers bind in a sequential fashion forming a multimeric L10(L12)X complex. One or more lysine residues are methylated.

Functionally, forms part of the ribosomal stalk which helps the ribosome interact with GTP-bound translation factors. The chain is Large ribosomal subunit protein uL11 from Persephonella marina (strain DSM 14350 / EX-H1).